A 386-amino-acid polypeptide reads, in one-letter code: Succinate--CoA ligase [ADP-forming] subunit beta (386 aa).

The 236-residue stretch at 9–244 (KEILRKYGVP…HDEEDPLETR (236 aa)) folds into the ATP-grasp domain. ATP is bound by residues Lys46, 53–55 (GRG), Glu99, Cys102, and Glu107. Residues Asn199 and Asp213 each contribute to the Mg(2+) site. Substrate contacts are provided by residues Asn264 and 321–323 (GIM).

It belongs to the succinate/malate CoA ligase beta subunit family. In terms of assembly, heterotetramer of two alpha and two beta subunits. Mg(2+) serves as cofactor.

It carries out the reaction succinate + ATP + CoA = succinyl-CoA + ADP + phosphate. It catalyses the reaction GTP + succinate + CoA = succinyl-CoA + GDP + phosphate. The protein operates within carbohydrate metabolism; tricarboxylic acid cycle; succinate from succinyl-CoA (ligase route): step 1/1. Functionally, succinyl-CoA synthetase functions in the citric acid cycle (TCA), coupling the hydrolysis of succinyl-CoA to the synthesis of either ATP or GTP and thus represents the only step of substrate-level phosphorylation in the TCA. The beta subunit provides nucleotide specificity of the enzyme and binds the substrate succinate, while the binding sites for coenzyme A and phosphate are found in the alpha subunit. The polypeptide is Succinate--CoA ligase [ADP-forming] subunit beta (Rickettsia akari (strain Hartford)).